Reading from the N-terminus, the 260-residue chain is Homeobox protein CDX-1 (260 aa).

Positions 149 to 208 form a DNA-binding region, homeobox; the sequence is KDKYRVVYTDHQRLELEKEFHYSRYITIRRKAELAAALGLTERQVKIWFQNRRAKERKVN. The interaction with DNA stretch occupies residues 152 to 173; that stretch reads YRVVYTDHQRLELEKEFHYSRY. The interaction with 5-mCpG DNA stretch occupies residues 191 to 202; it reads RQVKIWFQNRRA. The segment at 204–260 is disordered; it reads ERKVNKKKLQQQSQPTSTTTPTPPAVGTPGPMGTLCSGSAPSLVSSSPLTIKEEFMP. Low complexity-rich tracts occupy residues 213–223 and 240–252; these read QQQSQPTSTTT and SGSA…SSPL.

This sequence belongs to the Caudal homeobox family.

Its subcellular location is the nucleus. Its function is as follows. Plays a role in transcriptional regulation. Involved in activated KRAS-mediated transcriptional activation of PRKD1. Binds to the PRKD1 promoter. Could play a role in the terminal differentiation of the intestine. Binds preferentially to methylated DNA. This chain is Homeobox protein CDX-1 (CDX1), found in Gallus gallus (Chicken).